Reading from the N-terminus, the 129-residue chain is Large-conductance mechanosensitive channel (129 aa).

Transmembrane regions (helical) follow at residues 10–30 (FAVKGNVVDMAVGVIIGGAFG) and 70–90 (AVMLKYGAFIQNVFLLGVIAI).

The protein belongs to the MscL family. As to quaternary structure, homopentamer.

Its subcellular location is the cell inner membrane. In terms of biological role, channel that opens in response to stretch forces in the membrane lipid bilayer. May participate in the regulation of osmotic pressure changes within the cell. The chain is Large-conductance mechanosensitive channel from Actinobacillus pleuropneumoniae serotype 3 (strain JL03).